A 425-amino-acid chain; its full sequence is Serine--tRNA ligase (425 aa).

230 to 232 serves as a coordination point for L-serine; sequence TAE. Position 261–263 (261–263) interacts with ATP; that stretch reads RSE. Glu284 provides a ligand contact to L-serine. 348-351 is an ATP binding site; that stretch reads EISS. L-serine is bound at residue Ser384.

Belongs to the class-II aminoacyl-tRNA synthetase family. Type-1 seryl-tRNA synthetase subfamily. As to quaternary structure, homodimer. The tRNA molecule binds across the dimer.

The protein localises to the cytoplasm. It catalyses the reaction tRNA(Ser) + L-serine + ATP = L-seryl-tRNA(Ser) + AMP + diphosphate + H(+). The catalysed reaction is tRNA(Sec) + L-serine + ATP = L-seryl-tRNA(Sec) + AMP + diphosphate + H(+). Its pathway is aminoacyl-tRNA biosynthesis; selenocysteinyl-tRNA(Sec) biosynthesis; L-seryl-tRNA(Sec) from L-serine and tRNA(Sec): step 1/1. In terms of biological role, catalyzes the attachment of serine to tRNA(Ser). Is also able to aminoacylate tRNA(Sec) with serine, to form the misacylated tRNA L-seryl-tRNA(Sec), which will be further converted into selenocysteinyl-tRNA(Sec). In Streptococcus pyogenes serotype M6 (strain ATCC BAA-946 / MGAS10394), this protein is Serine--tRNA ligase.